A 627-amino-acid chain; its full sequence is Protein fem-1 homolog B (627 aa).

ANK repeat units lie at residues 45–74, 87–116, 120–149, and 153–182; these read QRST…VQTQ, DGAT…NVNH, TNST…NISI, and YDNT…DPNA. Zn(2+) is bound by residues H185, C186, and H218. ANK repeat units follow at residues 186-215 and 218-248; these read CGAT…AIVV and HGMT…DRRS. Residues 344–377 form a TPR repeat; it reads SHPIIYRGAVYADNMEFEQCIKLWLHALHLRQKG. ANK repeat units follow at residues 483 to 527 and 531 to 568; these read EGFT…EVNA and EGNS…HTDM.

The protein belongs to the fem-1 family. Component of a CRL2 E3 ubiquitin-protein ligase complex, also named ECS (Elongin BC-CUL2/5-SOCS-box protein) complex, composed of CUL2, Elongin BC (ELOB and ELOC), RBX1 and substrate-specific adapter FEM1B. Homooligomer. Interacts with PPM1F and PHTF1. Interacts with the death domain of FAS/TNFRSF6 and TNFRSF1A. Interacts with CHEK1. Interacts with NKX3-1. As to expression, widely expressed. Highly expressed in testis. Weakly expressed in other tissues.

Its subcellular location is the cytoplasm. It is found in the nucleus. The protein operates within protein modification; protein ubiquitination. Activity of the CRL2(FEM1B) complex toward FNIP1 is inhibited by BEX family proteins (BEX1, BEX2, BEX3, BEX4 and/or BEX5) in absence of reductive stress. Mechanistically, BEX proteins act as pseudosubstrate inhibitors that associate with FEM1B via zinc in absence of reductive stress, thereby preventing association between FEM1B and FNIP1. Its function is as follows. Substrate-recognition component of a Cul2-RING (CRL2) E3 ubiquitin-protein ligase complex of the DesCEND (destruction via C-end degrons) pathway, which recognizes a C-degron located at the extreme C terminus of target proteins, leading to their ubiquitination and degradation. The C-degron recognized by the DesCEND pathway is usually a motif of less than ten residues and can be present in full-length proteins, truncated proteins or proteolytically cleaved forms. The CRL2(FEM1B) complex specifically recognizes proteins ending with -Gly-Leu-Asp-Arg, such as CDK5R1, leading to their ubiquitination and degradation. Also acts as a regulator of the reductive stress response by mediating ubiquitination of reduced FNIP1: in response to reductive stress, the CRL2(FEM1B) complex specifically recognizes a conserved Cys degron in FNIP1 when this degron is reduced, leading to FNIP1 degradation and subsequent activation of mitochondria to recalibrate reactive oxygen species (ROS). Mechanistically, recognizes and binds reduced FNIP1 through two interface zinc ions, which act as a molecular glue that recruit reduced FNIP1 to FEM1B. Promotes ubiquitination of GLI1, suppressing GLI1 transcriptional activator activity. Promotes ubiquitination and degradation of ANKRD37. Promotes ubiquitination and degradation of SLBP. Involved in apoptosis by acting as a death receptor-associated protein that mediates apoptosis. Also involved in glucose homeostasis in pancreatic islet. May also act as an adapter/mediator in replication stress-induced signaling that leads to the activation of CHEK1. The sequence is that of Protein fem-1 homolog B from Homo sapiens (Human).